The primary structure comprises 127 residues: Protein ApaG (127 aa).

The region spanning 3–127 (DDPRYRVEVE…FVLSVPRTLH (125 aa)) is the ApaG domain.

The chain is Protein ApaG from Xanthomonas oryzae pv. oryzae (strain MAFF 311018).